Here is a 521-residue protein sequence, read N- to C-terminus: HTH-type transcriptional regulatory protein TyrR (521 aa).

The ACT domain occupies arginine 2–tyrosine 72. The PAS domain occupies glutamate 78–isoleucine 120. A Sigma-54 factor interaction domain is found at isoleucine 207–threonine 436. ATP-binding positions include glycine 235 to aspartate 242 and alanine 298 to glutamate 307. The H-T-H motif DNA-binding region spans serine 489–arginine 509.

In terms of assembly, homodimer. In presence of tyrosine (or high concentrations of phenylalanine or tryptophan) and ATP, it self-associates to form an hexamer.

It localises to the cytoplasm. Its function is as follows. Dual transcriptional regulator of the TyrR regulon, which includes a number of genes coding for proteins involved in the biosynthesis or transport of the three aromatic amino acids, phenylalanine, tyrosine and tryptophan. These three aromatic amino acids act as effectors which bind to the TyrR protein to form an active regulatory protein. Acts by binding specifically to TyrR boxes in the promoter region of the target genes. The sequence is that of HTH-type transcriptional regulatory protein TyrR from Enterobacter agglomerans (Erwinia herbicola).